Consider the following 540-residue polypeptide: Chaperonin GroEL (540 aa).

Residues 29-32 (TLGP), 86-90 (DGTTT), G413, 478-480 (DAL), and D494 contribute to the ATP site.

It belongs to the chaperonin (HSP60) family. Forms a cylinder of 14 subunits composed of two heptameric rings stacked back-to-back. Interacts with the co-chaperonin GroES.

The protein localises to the cytoplasm. The catalysed reaction is ATP + H2O + a folded polypeptide = ADP + phosphate + an unfolded polypeptide.. In terms of biological role, together with its co-chaperonin GroES, plays an essential role in assisting protein folding. The GroEL-GroES system forms a nano-cage that allows encapsulation of the non-native substrate proteins and provides a physical environment optimized to promote and accelerate protein folding. This Clostridioides difficile (Peptoclostridium difficile) protein is Chaperonin GroEL.